The chain runs to 223 residues: ATP-dependent Clp protease proteolytic subunit 2 (223 aa).

The Nucleophile role is filled by Ser-118. His-143 is an active-site residue.

This sequence belongs to the peptidase S14 family. Fourteen ClpP subunits assemble into 2 heptameric rings which stack back to back to give a disk-like structure with a central cavity, resembling the structure of eukaryotic proteasomes.

It is found in the cytoplasm. The catalysed reaction is Hydrolysis of proteins to small peptides in the presence of ATP and magnesium. alpha-casein is the usual test substrate. In the absence of ATP, only oligopeptides shorter than five residues are hydrolyzed (such as succinyl-Leu-Tyr-|-NHMec, and Leu-Tyr-Leu-|-Tyr-Trp, in which cleavage of the -Tyr-|-Leu- and -Tyr-|-Trp bonds also occurs).. Cleaves peptides in various proteins in a process that requires ATP hydrolysis. Has a chymotrypsin-like activity. Plays a major role in the degradation of misfolded proteins. The polypeptide is ATP-dependent Clp protease proteolytic subunit 2 (Leifsonia xyli subsp. xyli (strain CTCB07)).